The following is a 566-amino-acid chain: Pentatricopeptide repeat-containing protein At4g11690 (566 aa).

13 PPR repeats span residues 93–127 (KFRL…GFVP), 128–158 (GSNC…NKSK), 162–196 (DVYS…GFSP), 197–231 (NVVI…GLVA), 232–266 (NERT…GVFP), 267–301 (NLYT…GVSC), 302–336 (NIVT…GINP), 337–371 (NLIT…GLSP), 372–406 (SLVT…GIKP), 407–441 (SKVT…GLVP), 442–476 (DVHT…NCEP), 477–511 (NEVI…ELAP), and 512–546 (NVAS…GIDP).

Belongs to the PPR family. P subfamily.

This chain is Pentatricopeptide repeat-containing protein At4g11690, found in Arabidopsis thaliana (Mouse-ear cress).